The chain runs to 66 residues: DNA-directed RNA polymerase subunit Rpo10 (66 aa).

Residues cysteine 7, cysteine 10, cysteine 44, and cysteine 45 each coordinate Zn(2+).

Belongs to the archaeal Rpo10/eukaryotic RPB10 RNA polymerase subunit family. In terms of assembly, part of the RNA polymerase complex. It depends on Zn(2+) as a cofactor.

It is found in the cytoplasm. The catalysed reaction is RNA(n) + a ribonucleoside 5'-triphosphate = RNA(n+1) + diphosphate. Functionally, DNA-dependent RNA polymerase (RNAP) catalyzes the transcription of DNA into RNA using the four ribonucleoside triphosphates as substrates. The polypeptide is DNA-directed RNA polymerase subunit Rpo10 (Pyrobaculum neutrophilum (strain DSM 2338 / JCM 9278 / NBRC 100436 / V24Sta) (Thermoproteus neutrophilus)).